The sequence spans 227 residues: Dephospho-CoA kinase (227 aa).

Positions 31 to 227 constitute a DPCK domain; sequence KIGLTGGIGS…EKLFQFINCL (197 aa). 39-44 contacts ATP; sequence GSGKST.

It belongs to the CoaE family.

Its subcellular location is the cytoplasm. It catalyses the reaction 3'-dephospho-CoA + ATP = ADP + CoA + H(+). It participates in cofactor biosynthesis; coenzyme A biosynthesis; CoA from (R)-pantothenate: step 5/5. Catalyzes the phosphorylation of the 3'-hydroxyl group of dephosphocoenzyme A to form coenzyme A. The polypeptide is Dephospho-CoA kinase (Clostridium tetani (strain Massachusetts / E88)).